The primary structure comprises 239 residues: Bidirectional sugar transporter SWEET8 (239 aa).

At 1–6 (MVDAKQ) the chain is on the extracellular side. Residues 7-27 (VRFIIGVIGNVISFGLFAAPA) form a helical membrane-spanning segment. The MtN3/slv 1 domain occupies 9 to 98 (FIIGVIGNVI…VYLMYCGHKK (90 aa)). Residues 28–44 (KTFWRIFKKKSVEEFSY) are Cytoplasmic-facing. Residues 45-65 (VPYVATVMNCMLWVFYGLPVV) traverse the membrane as a helical segment. Residues 66 to 69 (HKDS) are Extracellular-facing. A helical transmembrane segment spans residues 70–90 (ILVSTINGVGLVIELFYVGVY). At 91 to 103 (LMYCGHKKNHRRN) the chain is on the cytoplasmic side. The chain crosses the membrane as a helical span at residues 104–124 (ILGFLALEVILVVAIILITLF). At 125-135 (ALKGDFVKQTF) the chain is on the extracellular side. Positions 134 to 185 (TFVGVICDVFNIAMYGAPSLAIIKVVKTKSVEYMPFLLSLVCFVNAGIWTTY) constitute a MtN3/slv 2 domain. A helical transmembrane segment spans residues 136–156 (VGVICDVFNIAMYGAPSLAII). At 157–168 (KVVKTKSVEYMP) the chain is on the cytoplasmic side. The chain crosses the membrane as a helical span at residues 169-189 (FLLSLVCFVNAGIWTTYSLIF). At 190–194 (KIDYY) the chain is on the extracellular side. Residues 195–215 (VLASNGIGTFLALSQLIVYFM) traverse the membrane as a helical segment. Residues 216 to 239 (YYKSTPKEKTVKPSEVEISATERV) are Cytoplasmic-facing.

Belongs to the SWEET sugar transporter family. As to quaternary structure, forms homooligomers and heterooligomers with SWEET4, SWEET5, SWEET6, SWEET7, SWEET9, SWEET10, SWEET11, SWEET13, SWEET15, SWEET16 and SWEET17. In terms of tissue distribution, expressed in inflorescences, embryo sacs and pollen, and at a lower level in stems. Barely detected in roots, leaves and seedlings.

The protein localises to the cell membrane. Functionally, mediates both low-affinity uptake and efflux of sugar across the plasma membrane. Required, in pollen, for microspore cell integrity and primexine pattern formation. This Arabidopsis thaliana (Mouse-ear cress) protein is Bidirectional sugar transporter SWEET8.